The sequence spans 306 residues: Pyridoxal 5'-phosphate synthase subunit SNZERR (306 aa).

Position 34 (Asp-34) interacts with D-ribose 5-phosphate. Lys-91 serves as the catalytic Schiff-base intermediate with D-ribose 5-phosphate. Gly-163 contributes to the D-ribose 5-phosphate binding site. D-glyceraldehyde 3-phosphate is bound at residue Arg-175. D-ribose 5-phosphate-binding positions include Gly-224 and Gly-245–Ser-246.

This sequence belongs to the PdxS/SNZ family.

It carries out the reaction aldehydo-D-ribose 5-phosphate + D-glyceraldehyde 3-phosphate + L-glutamine = pyridoxal 5'-phosphate + L-glutamate + phosphate + 3 H2O + H(+). It functions in the pathway cofactor biosynthesis; pyridoxal 5'-phosphate biosynthesis. Catalyzes the formation of pyridoxal 5'-phosphate from ribose 5-phosphate (RBP), glyceraldehyde 3-phosphate (G3P) and ammonia. The ammonia is provided by PDX2. Can also use ribulose 5-phosphate and dihydroxyacetone phosphate as substrates, resulting from enzyme-catalyzed isomerization of RBP and G3P, respectively. Also plays an indirect role in resistance to singlet oxygen-generating photosensitizers. This chain is Pyridoxal 5'-phosphate synthase subunit SNZERR (SNZERR), found in Suberites domuncula (Sponge).